Consider the following 547-residue polypeptide: Chaperonin GroEL 1 (547 aa).

ATP is bound by residues 30 to 33 (TLGP), Lys-51, 87 to 91 (DGTTT), Gly-415, and Asp-496.

The protein belongs to the chaperonin (HSP60) family. Forms a cylinder of 14 subunits composed of two heptameric rings stacked back-to-back. Interacts with the co-chaperonin GroES.

Its subcellular location is the cytoplasm. It catalyses the reaction ATP + H2O + a folded polypeptide = ADP + phosphate + an unfolded polypeptide.. Functionally, together with its co-chaperonin GroES, plays an essential role in assisting protein folding. The GroEL-GroES system forms a nano-cage that allows encapsulation of the non-native substrate proteins and provides a physical environment optimized to promote and accelerate protein folding. The polypeptide is Chaperonin GroEL 1 (Gluconacetobacter diazotrophicus (strain ATCC 49037 / DSM 5601 / CCUG 37298 / CIP 103539 / LMG 7603 / PAl5)).